The primary structure comprises 473 residues: Lactate utilization protein B (473 aa).

4Fe-4S ferredoxin-type domains are found at residues 302–332 and 351–380; these read GSEF…GHSY and YNDY…LHDL. C311, C314, C317, C321, C364, C367, and C371 together coordinate [4Fe-4S] cluster.

This sequence belongs to the LutB/YkgF family.

Its function is as follows. Is involved in L-lactate degradation and allows cells to grow with lactate as the sole carbon source. Has probably a role as an electron transporter during oxidation of L-lactate. The chain is Lactate utilization protein B from Bacillus cereus (strain AH820).